Consider the following 343-residue polypeptide: Galactoside alpha-(1,2)-fucosyltransferase 2 (343 aa).

Residues 1–14 (MLVVQMPFSFPMAH) lie on the Cytoplasmic side of the membrane. A helical; Signal-anchor for type II membrane protein membrane pass occupies residues 15–28 (FILFVFTVSTIFHV). The Lumenal portion of the chain corresponds to 29–343 (QQRLAKIQAM…AADLSPLLKH (315 aa)). 3 N-linked (GlcNAc...) asparagine glycosylation sites follow: Asn188, Asn282, and Asn308.

Belongs to the glycosyltransferase 11 family.

Its subcellular location is the golgi apparatus. The protein localises to the golgi stack membrane. It catalyses the reaction a beta-D-galactosyl-(1-&gt;3)-N-acetyl-beta-D-glucosaminyl derivative + GDP-beta-L-fucose = an alpha-L-Fuc-(1-&gt;2)-beta-D-Gal-(1-&gt;3)-beta-D-GlcNAc derivative + GDP + H(+). It carries out the reaction a beta-D-galactosyl-(1-&gt;4)-N-acetyl-beta-D-glucosaminyl derivative + GDP-beta-L-fucose = an alpha-L-Fuc-(1-&gt;2)-beta-D-Gal-(1-&gt;4)-beta-D-GlcNAc derivative + GDP + H(+). The catalysed reaction is a neolactoside nLc4Cer + GDP-beta-L-fucose = a neolactoside IV(2)-alpha-Fuc-nLc4Cer + GDP + H(+). The enzyme catalyses a neolactoside nLc4Cer(d18:1(4E)) + GDP-beta-L-fucose = a neolactoside IV(2)-alpha-Fuc-nLc4Cer(d18:1(4E)) + GDP + H(+). It catalyses the reaction a ganglioside GM1 + GDP-beta-L-fucose = a ganglioside Fuc-GM1 + GDP + H(+). It carries out the reaction a ganglioside GA1 + GDP-beta-L-fucose = a ganglioside Fuc-GA1 + GDP + H(+). The catalysed reaction is Lc4Cer + GDP-beta-L-fucose = alpha-L-fucosyl-(1-&gt;2)-beta-D-galactosyl-(1-&gt;3)-N-acetyl-beta-D-glucosaminyl-(1-&gt;3)-beta-D-galactosyl-(1-&gt;4)-beta-D-glucosyl-(1&lt;-&gt;1')-ceramide + GDP + H(+). The enzyme catalyses a beta-D-Gal-(1-&gt;3)-beta-D-GlcNAc-(1-&gt;3)-beta-D-Gal-(1-&gt;4)-beta-D-Glc-(1&lt;-&gt;1')-Cer(d18:1(4E)) + GDP-beta-L-fucose = alpha-L-fucosyl-(1-&gt;2)- beta-D-galactosyl-(1-&gt;3)-N-acetyl-beta-D-glucosaminyl-(1-&gt;3)-beta-D-galactosyl-(1-&gt;4)-beta-D-glucosyl-(1&lt;-&gt;1')-N-acylsphing-4-enine + GDP + H(+). It catalyses the reaction a ganglioside GD1b + GDP-beta-L-fucose = a ganglioside Fuc-GD1b + GDP + H(+). It carries out the reaction a ganglioside GM1 (d18:1(4E)) + GDP-beta-L-fucose = a ganglioside Fuc-GM1 (d18:1(4E)) + GDP + H(+). The catalysed reaction is a globoside GalGb4Cer (d18:1(4E)) + GDP-beta-L-fucose = a globoside Globo-H (d18:1(4E)) + GDP + H(+). The enzyme catalyses a lactoside III(4)-a-Fuc-Lc4Cer + GDP-beta-L-fucose = a lactoside IV(2),III(4)-a-[Fuc]2-Lc4Cer + GDP + H(+). It catalyses the reaction beta-D-galactosyl-(1-&gt;3)-N-acetyl-D-galactosamine + GDP-beta-L-fucose = alpha-L-fucosyl-(1-&gt;2)-beta-D-galactosyl-(1-&gt;3)-N-acetyl-D-galactosamine + GDP + H(+). It participates in protein modification; protein glycosylation. Its function is as follows. Catalyzes the transfer of L-fucose, from a guanosine diphosphate-beta-L-fucose, to the terminal galactose on both O- and N-linked glycans chains of cell surface glycoproteins and glycolipids and the resulting epitope regulates several processes such as cell-cell interaction including host-microbe interaction, cell surface expression and cell proliferation. Preferentially fucosylates gangliosides GA1 and GM1 in the antrum, cecum and colon and in the female reproductive organs. Fucosylated host glycoproteins or glycolipids mediate interaction with intestinal microbiota influencing its composition. Creates a soluble precursor oligosaccharide FuC-alpha ((1,2)Galbeta-) called the H antigen which is an essential substrate for the final step in the soluble ABO blood group antigen synthesis pathway. The sequence is that of Galactoside alpha-(1,2)-fucosyltransferase 2 from Hylobates lar (Lar gibbon).